A 121-amino-acid polypeptide reads, in one-letter code: Putative membrane protein insertion efficiency factor (121 aa).

It belongs to the UPF0161 family.

It is found in the cell membrane. Functionally, could be involved in insertion of integral membrane proteins into the membrane. In Rhodococcus opacus (strain B4), this protein is Putative membrane protein insertion efficiency factor.